Consider the following 113-residue polypeptide: Ribulose bisphosphate carboxylase small subunit (113 aa).

It belongs to the RuBisCO small chain family. As to quaternary structure, heterohexadecamer of 8 large and 8 small subunits.

The protein localises to the carboxysome. Functionally, ruBisCO catalyzes two reactions: the carboxylation of D-ribulose 1,5-bisphosphate, the primary event in carbon dioxide fixation, as well as the oxidative fragmentation of the pentose substrate in the photorespiration process. Both reactions occur simultaneously and in competition at the same active site. Although the small subunit is not catalytic it is essential for maximal activity. The polypeptide is Ribulose bisphosphate carboxylase small subunit (Synechococcus sp. (strain WH7803)).